Consider the following 346-residue polypeptide: Biotin synthase (346 aa).

The Radical SAM core domain occupies 38–256 (RQVQVSTLLS…IAVARIMMPT (219 aa)). Residues C53, C57, and C60 each contribute to the [4Fe-4S] cluster site. [2Fe-2S] cluster-binding residues include C97, C128, C188, and R260.

It belongs to the radical SAM superfamily. Biotin synthase family. Homodimer. [4Fe-4S] cluster serves as cofactor. It depends on [2Fe-2S] cluster as a cofactor.

The catalysed reaction is (4R,5S)-dethiobiotin + (sulfur carrier)-SH + 2 reduced [2Fe-2S]-[ferredoxin] + 2 S-adenosyl-L-methionine = (sulfur carrier)-H + biotin + 2 5'-deoxyadenosine + 2 L-methionine + 2 oxidized [2Fe-2S]-[ferredoxin]. The protein operates within cofactor biosynthesis; biotin biosynthesis; biotin from 7,8-diaminononanoate: step 2/2. Functionally, catalyzes the conversion of dethiobiotin (DTB) to biotin by the insertion of a sulfur atom into dethiobiotin via a radical-based mechanism. The chain is Biotin synthase from Escherichia fergusonii (strain ATCC 35469 / DSM 13698 / CCUG 18766 / IAM 14443 / JCM 21226 / LMG 7866 / NBRC 102419 / NCTC 12128 / CDC 0568-73).